The sequence spans 354 residues: Short-chain dehydrogenase/reductase SAT2 (354 aa).

The NADP(+) site is built by I31, D85, R201, and V233.

Belongs to the short-chain dehydrogenases/reductases (SDR) family.

The protein operates within mycotoxin biosynthesis. Its function is as follows. Short-chain dehydrogenase/reductase; part of the satratoxin SC1 cluster involved in the biosynthesis of satratoxins, trichothecene mycotoxins that are associated with human food poisonings. Satratoxins are suggested to be made by products of multiple gene clusters (SC1, SC2 and SC3) that encode 21 proteins in all, including polyketide synthases, acetyltransferases, and other enzymes expected to modify the trichothecene skeleton. SC1 encodes 10 proteins, SAT1 to SAT10. The largest are SAT8, which encodes a putative polyketide synthase (PKS) with a conventional non-reducing architecture, and SAT10, a putative protein containing four ankyrin repeats and thus may be involved in protein scaffolding. The putative short-chain reductase SAT3 may assist the PKS in some capacity. SAT6 contains a secretory lipase domain and acts probably as a trichothecene esterase. SAT5 encodes a putative acetyltransferase, and so, with SAT6, may affect endogenous protection from toxicity. The probable transcription factor SAT9 may regulate the expression of the SC1 cluster. SC2 encodes proteins SAT11 to SAT16, the largest of which encodes the putative reducing PKS SAT13. SAT11 is a cytochrome P450 monooxygenase, while SAT14 and SAT16 are probable acetyltransferases. The SC2 cluster may be regulated by the transcription factor SAT15. SC3 is a small cluster that encodes 5 proteins, SAT17 to SAT21. SAT21 is a putative MFS-type transporter which may have a role in exporting secondary metabolites. The four other proteins putatively encoded in SC3 include the taurine hydroxylase-like protein SAT17, the O-methyltransferase SAT18, the acetyltransferase SAT19, and the Cys6-type zinc finger SAT20, the latter being probably involved in regulation of SC3 expression. The protein is Short-chain dehydrogenase/reductase SAT2 of Stachybotrys chartarum (strain CBS 109288 / IBT 7711) (Toxic black mold).